The sequence spans 202 residues: Phospholipase A2 inhibitor gamma subunit A (202 aa).

The N-terminal stretch at Met1–Cys19 is a signal peptide. Disulfide bonds link Cys22–Cys47, Cys25–Cys32, Cys40–Cys68, Cys74–Cys95, Cys96–Cys101, Cys119–Cys144, Cys137–Cys166, and Cys170–Cys192.

It belongs to the CNF-like-inhibitor family. In terms of assembly, heteromer composed of subunit A and subunit B. Expressed by the liver.

The protein localises to the secreted. Inhibits the enzymatic activity of the phospholipase A2 (PLA2). This chain is Phospholipase A2 inhibitor gamma subunit A, found in Elaphe climacophora (Japanese rat snake).